The primary structure comprises 502 residues: Uric acid degradation bifunctional protein (502 aa).

Residues 1–178 (MMRLKQLNEM…NSMTKHKERV (178 aa)) form an OHCU decarboxylase region. The Proton donor; for OHCU decarboxylase activity role is filled by His68. Residues Pro69, 81–85 (SQEEQ), and 116–120 (FVMAV) each bind 5-hydroxy-2-oxo-4-ureido-2,5-dihydro-1H-imidazole-5-carboxylate. Residues 179–502 (MYYGKGDVFA…DEPDHKGALK (324 aa)) are urate oxidase. Lys183 functions as the Charge relay system; for urate oxidase activity in the catalytic mechanism. The active-site Charge relay system is the Lys194. The Charge relay system; for urate oxidase activity role is filled by Thr243. Urate is bound by residues Thr243, Asp244, Phe354, Arg371, Ile419, Gln420, and Asn446.

This sequence in the N-terminal section; belongs to the OHCU decarboxylase family. It in the C-terminal section; belongs to the uricase family.

It catalyses the reaction 5-hydroxy-2-oxo-4-ureido-2,5-dihydro-1H-imidazole-5-carboxylate + H(+) = (S)-allantoin + CO2. It carries out the reaction urate + O2 + H2O = 5-hydroxyisourate + H2O2. The protein operates within purine metabolism; urate degradation; (S)-allantoin from urate: step 1/3. Its pathway is purine metabolism; urate degradation; (S)-allantoin from urate: step 3/3. Functionally, catalyzes two steps in the degradation of uric acid, i.e. the oxidation of uric acid to 5-hydroxyisourate (HIU) and the stereoselective decarboxylation of 2-oxo-4-hydroxy-4-carboxy-5-ureidoimidazoline (OHCU) to (S)-allantoin. This chain is Uric acid degradation bifunctional protein (uao), found in Bacillus sp. (strain TB-90).